Consider the following 620-residue polypeptide: Lamin-B2 (620 aa).

The interval 1-38 is disordered; sequence MSPPSPGRRREQRRPRAAATMATPLPGRAGGPATPLSP. Residues 1–48 are head; the sequence is MSPPSPGRRREQRRPRAAATMATPLPGRAGGPATPLSPTRLSRLQEKE. 2 positions are modified to phosphothreonine: Thr23 and Thr34. The residue at position 37 (Ser37) is a Phosphoserine. The IF rod domain maps to 46 to 402; the sequence is EKEELRELND…KLLEGEEERL (357 aa). Residues 49 to 83 form a coil 1A region; sequence ELRELNDRLAHYIDRVRALELENDRLLLKISEKEE. A Glycyl lysine isopeptide (Lys-Gly) (interchain with G-Cter in SUMO2) cross-link involves residue Lys77. At Lys81 the chain carries N6-acetyllysine; alternate. Residue Lys81 forms a Glycyl lysine isopeptide (Lys-Gly) (interchain with G-Cter in SUMO2); alternate linkage. Positions 84 to 95 are linker 1; sequence VTTREVSGIKAL. The interval 96–229 is coil 1B; the sequence is YESELADARR…DFRKSVFEEE (134 aa). Residues Lys195 and Lys255 each participate in a glycyl lysine isopeptide (Lys-Gly) (interchain with G-Cter in SUMO2) cross-link. The tract at residues 230–256 is linker 2; sequence VRETRRRHERRLVEVDSSRQQEYDFKM. The interval 257-400 is coil 2; sequence AQALEELRSQ…YRKLLEGEEE (144 aa). Phosphoserine is present on residues Ser316 and Ser407. Residues 399-464 are disordered; it reads EERLKLSPSP…GTGGSGGFHL (66 aa). The interval 401 to 620 is tail; that stretch reads RLKLSPSPSS…RTTSRGCYVM (220 aa). Positions 404-431 are enriched in low complexity; it reads LSPSPSSRVTVSRATSSSSGSLSATGRL. An O-linked (GlcNAc) threonine glycan is attached at Thr413. Residues Ser420, Ser422, Ser424, and Ser426 each carry the phosphoserine modification. Position 433 is an omega-N-methylarginine (Arg433). The short motif at 435–440 is the Nuclear localization signal element; sequence KRKRLE. Residues 444–453 show a composition bias toward low complexity; it reads PLGSGPSVLG. An LTD domain is found at 462–579; sequence FHLAQQASAS…EEVAMRTVKK (118 aa). Residue Lys489 forms a Glycyl lysine isopeptide (Lys-Gly) (interchain with G-Cter in SUMO2) linkage. The residue at position 497 (Ser497) is a Phosphoserine. Positions 581–620 are disordered; the sequence is SVMRENENGEEEEEEAEFGEEDLFHQQGDPRTTSRGCYVM. The span at 588–601 shows a compositional bias: acidic residues; it reads NGEEEEEEAEFGEE. Residues 609-620 are compositionally biased toward polar residues; the sequence is DPRTTSRGCYVM. Cys617 is subject to Cysteine methyl ester. Cys617 is lipidated: S-farnesyl cysteine. A propeptide spans 618 to 620 (removed in mature form); it reads YVM.

Belongs to the intermediate filament family. As to quaternary structure, dimer. Lamin dimers then assemble into dimeric head-to-tail polymers. Ultimately, two head-to-tail polymers assemble laterally into a protofilament with a uniformly shaped rod of 3.5 nm in diameter. Interacts with TMEM43. B-type lamins undergo a series of modifications, such as farnesylation and phosphorylation. Increased phosphorylation of the lamins occurs before envelope disintegration and probably plays a role in regulating lamin associations. Post-translationally, phosphorylation plays a key role in lamin organization, subcellular localization and nuclear envelope disintegration. Phosphorylation by CDK1 at Ser-37 and Ser-407 at the onset of mitosis drives lamin disassembly and nuclear envelope breakdown.

It is found in the nucleus lamina. In terms of biological role, lamins are intermediate filament proteins that assemble into a filamentous meshwork, and which constitute the major components of the nuclear lamina, a fibrous layer on the nucleoplasmic side of the inner nuclear membrane. Lamins provide a framework for the nuclear envelope, bridging the nuclear envelope and chromatin, thereby playing an important role in nuclear assembly, chromatin organization, nuclear membrane and telomere dynamics. The structural integrity of the lamina is strictly controlled by the cell cycle, as seen by the disintegration and formation of the nuclear envelope in prophase and telophase, respectively. In Homo sapiens (Human), this protein is Lamin-B2 (LMNB2).